The primary structure comprises 369 residues: MSTTVEKIKAIEDEMARTQKNKATSFHLGQLKAKLAKLRRELLTSASSGSGGGAGIGFDVARTGVASVGFVGFPSVGKSTLLSKLTGTESEAAEYEFTTLVTVPGVIRYKGAKIQMLDLPGIIDGAKDGRGRGKQVIAVARTCNLLFIILDVNKPLHHKQIIEKELEGVGIRLNKTPPDILIKKKEKGGISITNTVPLTHLGNDEIRAVMSEYRINSAEIAFRCDATVDDLIDVLEASSRRYMPAIYVLNKIDSLSIEELELLYRIPNAVPISSGQDWNLDELLQVMWDRLNLVRIYTKPKGQIPDFTDPVVLRSDRCSVKDFCNQIHKSLVDDFRNALVYGSSVKHQPQYVGLSHILEDEDVVTILKK.

An N-acetylserine modification is found at Ser-2. The 227-residue stretch at 66–292 (ASVGFVGFPS…LLQVMWDRLN (227 aa)) folds into the OBG-type G domain. GTP contacts are provided by residues 72 to 79 (GFPSVGKS), 118 to 122 (DLPGI), and 250 to 253 (NKID). The TGS domain maps to 292-368 (NLVRIYTKPK…EDEDVVTILK (77 aa)).

Belongs to the TRAFAC class OBG-HflX-like GTPase superfamily. OBG GTPase family. As to quaternary structure, associates with translating polyribosomes. Interacts with GIR2, TMA46, YAP1 and YGR250C.

Its subcellular location is the cytoplasm. Involved in ribosomal function. This is Ribosome-interacting GTPase 1 (RBG1) from Saccharomyces cerevisiae (strain ATCC 204508 / S288c) (Baker's yeast).